We begin with the raw amino-acid sequence, 705 residues long: Protein artemis (705 aa).

Thr-380 is modified (phosphothreonine). Ser-385 carries the phosphoserine modification. Acidic residues predominate over residues 451-462; it reads EESNSDSGEELE. Disordered regions lie at residues 451–484, 535–569, and 638–675; these read EESN…NADP, PKLC…GWDS, and TLSG…AELP. The segment covering 546–559 has biased composition (low complexity); it reads THISSQNSSQSTHI. The segment covering 560 to 569 has biased composition (polar residues); that stretch reads TDQGSQGWDS. Low complexity predominate over residues 652–662; sequence SSTRADSQSSS. Position 658 is a phosphoserine; by ATM (Ser-658).

It belongs to the DNA repair metallo-beta-lactamase (DRMBL) family. In terms of assembly, interacts with LIG4; the interaction is direct. Interacts with ATM. Interacts with BRCA1. Interacts with PRKDC. Interacts with TP53BP1. Also exhibits ATM- and phosphorylation-dependent interaction with the MRN complex, composed of MRE11, RAD50, and NBN. Phosphorylation on undefined residues by PRKDC may stimulate endonucleolytic activity on 5' and 3' hairpins and overhangs. PRKDC must remain present, even after phosphorylation, for efficient hairpin opening. Also phosphorylated by ATM in response to ionizing radiation (IR) and by ATR in response to ultraviolet (UV) radiation.

It localises to the nucleus. In terms of biological role, required for V(D)J recombination, the process by which exons encoding the antigen-binding domains of immunoglobulins and T-cell receptor proteins are assembled from individual V, (D), and J gene segments. V(D)J recombination is initiated by the lymphoid specific RAG endonuclease complex, which generates site specific DNA double strand breaks (DSBs). These DSBs present two types of DNA end structures: hairpin sealed coding ends and phosphorylated blunt signal ends. These ends are independently repaired by the non homologous end joining (NHEJ) pathway to form coding and signal joints respectively. This protein likely exhibits single-strand specific 5'-3' exonuclease activity in isolation, and may acquire endonucleolytic activity on 5' and 3' hairpins and overhangs when in a complex with PRKDC. The latter activity may be required specifically for the resolution of closed hairpins prior to the formation of the coding joint. May also be required for the repair of complex DSBs induced by ionizing radiation, which require substantial end-processing prior to religation by NHEJ. This Mus musculus (Mouse) protein is Protein artemis (Dclre1c).